A 335-amino-acid chain; its full sequence is Karyogamy protein KAR4 (335 aa).

Positions 1–25 are disordered; sequence MAFQDPTYDQNKSRHINNSHLQGPN. Over residues 16-25 the composition is skewed to polar residues; the sequence is INNSHLQGPN.

The protein belongs to the MT-A70-like family. Component of the MIS (mRNA N6-methyladenosine (m6A) methylation) complex, at least composed of IME4, KAR4, MUM2, SLZ1, and VIR1. Interacts with VIR1.

It is found in the nucleus. Its subcellular location is the cytoplasm. Functionally, component of the MIS complex, a complex that mediates N6-methyladenosine (m6A) methylation of meiotic mRNAs and is required for initiation of meiosis, progression through the meiotic divisions and sporulation. May assist STE12 in the pheromone-dependent expression of KAR3 and CIK1. The polypeptide is Karyogamy protein KAR4 (KAR4) (Saccharomyces cerevisiae (strain ATCC 204508 / S288c) (Baker's yeast)).